Consider the following 801-residue polypeptide: Na(+)/H(+) antiporter subunit A1 (801 aa).

21 consecutive transmembrane segments (helical) span residues 4-25, 30-49, 79-101, 108-127, 131-153, 166-188, 208-230, 243-265, 270-289, 302-324, 339-361, 373-395, 429-451, 472-494, 526-548, 589-611, 621-641, 646-668, 672-694, 707-729, and 767-784; these read LHIA…YRFF, LGWF…LTLI, LGLL…SIGY, LGNF…GVVL, VIIL…SFWR, LIIT…IPTQ, FIFA…PFYI, SAYL…MTPI, QGWI…WASL, AFST…ISYH, AAIF…TGAV, LGGL…LSMA, YLFP…KFIM, ILML…FPGI, AFLS…SYWV, NNLV…SVPF, IRIF…LILF, LFSI…FFKA, ALTQ…YHLP, LTNA…IAYG, and LFES…YTMI.

This sequence belongs to the CPA3 antiporters (TC 2.A.63) subunit A family. In terms of assembly, may form a heterooligomeric complex that consists of seven subunits: mnhA1, mnhB1, mnhC1, mnhD1, mnhE1, mnhF1 and mnhG1.

It is found in the cell membrane. With respect to regulation, na(+) extrusion is completely inhibited by the H(+) conductor carbonyl cyanide m-chlorophenylhydrazone (CCCP). Its function is as follows. Mnh complex is a Na(+)/H(+) antiporter involved in Na(+) excretion. The sequence is that of Na(+)/H(+) antiporter subunit A1 (mnhA1) from Staphylococcus aureus (strain MRSA252).